A 452-amino-acid chain; its full sequence is MGALTISAKYLIELGFEVQGTVDKPDIIGALFSQTEGLLGSDLDLRELQNTSRIGRIEVEVEHRGDKTVGKVYVPSNLDHYETALIAAMLETVDRVGPYNAKFQVNSIKDLRSEKRKLIIDRAKELIKLIERETIPDTKELMDKFLGEVKQGEVVSYGPEGLPAGPDVESSDTVIIVEGRADVVNLIKHGYRNVIAIEGASGGIPKTVIELSRRKTTIAFTDGDRGGEMILRELLKVADIDYIARAPPGKEVEQLTAKEIAKALRNKIPVEEYINQLSKKDRQIIEESKKQIEQAQVQPSAAPTSPQPQPESTQPTQPIQQVQVTQQTQVIEVPAQTQGQVQVTTMQQSTQQTPQLPTSVVDEINKLSGTLEAIIYDKNWTVLKRVPVRDLLDTLQQVNDAYAIVFDGVGTQRLVDAAVGKGIKMLIMTRIGNIAKVPSDMVILTFNDIINK.

The Toprim domain maps to 172 to 248 (DTVIIVEGRA…DIDYIARAPP (77 aa)). 3 residues coordinate Mg(2+): Glu178, Asp222, and Asp224. The interval 289–320 (KKQIEQAQVQPSAAPTSPQPQPESTQPTQPIQ) is disordered. The segment covering 294 to 320 (QAQVQPSAAPTSPQPQPESTQPTQPIQ) has biased composition (low complexity).

The protein belongs to the archaeal DnaG primase family. Forms a ternary complex with MCM helicase and DNA. Component of the archaeal exosome complex. Mg(2+) serves as cofactor.

It catalyses the reaction ssDNA + n NTP = ssDNA/pppN(pN)n-1 hybrid + (n-1) diphosphate.. Its function is as follows. RNA polymerase that catalyzes the synthesis of short RNA molecules used as primers for DNA polymerase during DNA replication. Also part of the exosome, which is a complex involved in RNA degradation. Acts as a poly(A)-binding protein that enhances the interaction between heteromeric, adenine-rich transcripts and the exosome. This is DNA primase DnaG from Caldivirga maquilingensis (strain ATCC 700844 / DSM 13496 / JCM 10307 / IC-167).